The following is a 364-amino-acid chain: Cobalt-precorrin-5B C(1)-methyltransferase (364 aa).

The protein belongs to the CbiD family.

The catalysed reaction is Co-precorrin-5B + S-adenosyl-L-methionine = Co-precorrin-6A + S-adenosyl-L-homocysteine. The protein operates within cofactor biosynthesis; adenosylcobalamin biosynthesis; cob(II)yrinate a,c-diamide from sirohydrochlorin (anaerobic route): step 6/10. Functionally, catalyzes the methylation of C-1 in cobalt-precorrin-5B to form cobalt-precorrin-6A. In Pseudomonas putida (strain ATCC 47054 / DSM 6125 / CFBP 8728 / NCIMB 11950 / KT2440), this protein is Cobalt-precorrin-5B C(1)-methyltransferase.